The chain runs to 914 residues: Isoleucine--tRNA ligase (914 aa).

The short motif at 57-67 is the 'HIGH' region element; the sequence is PYANGQIHMGH. Glu554 lines the L-isoleucyl-5'-AMP pocket. Positions 595-599 match the 'KMSKS' region motif; sequence KMSKS. Lys598 lines the ATP pocket. Positions 883, 886, 904, and 907 each coordinate Zn(2+).

Belongs to the class-I aminoacyl-tRNA synthetase family. IleS type 1 subfamily. Monomer. The cofactor is Zn(2+).

The protein resides in the cytoplasm. It carries out the reaction tRNA(Ile) + L-isoleucine + ATP = L-isoleucyl-tRNA(Ile) + AMP + diphosphate. Functionally, catalyzes the attachment of isoleucine to tRNA(Ile). As IleRS can inadvertently accommodate and process structurally similar amino acids such as valine, to avoid such errors it has two additional distinct tRNA(Ile)-dependent editing activities. One activity is designated as 'pretransfer' editing and involves the hydrolysis of activated Val-AMP. The other activity is designated 'posttransfer' editing and involves deacylation of mischarged Val-tRNA(Ile). This chain is Isoleucine--tRNA ligase, found in Macrococcus caseolyticus (strain JCSC5402) (Macrococcoides caseolyticum).